Consider the following 57-residue polypeptide: Large ribosomal subunit protein bL32 (57 aa).

A compositionally biased stretch (basic residues) spans 1-16 (MAVQKSRKTRSKRGMR). Positions 1–45 (MAVQKSRKTRSKRGMRRSHDALTAPAQLSVDATSGETHRRHHMTA) are disordered.

It belongs to the bacterial ribosomal protein bL32 family.

This Psychromonas ingrahamii (strain DSM 17664 / CCUG 51855 / 37) protein is Large ribosomal subunit protein bL32.